Here is a 194-residue protein sequence, read N- to C-terminus: Dof zinc finger protein DOF1.7 (194 aa).

A Dof-type zinc finger spans residues 33–87; it reads LKCPRCDSPNTKFCYYNNYNLSQPRHFCKNCRRYWTKGGALRNIPVGGGTRKSNK. Positions 35, 38, 60, and 63 each coordinate Zn(2+). Residues 74–125 are disordered; it reads RNIPVGGGTRKSNKRSGSSPSSNLKNQTVAEKPDHHGSGSEEKEERVSGQEM. Positions 88 to 99 are enriched in low complexity; the sequence is RSGSSPSSNLKN. Positions 104–121 are enriched in basic and acidic residues; that stretch reads EKPDHHGSGSEEKEERVS.

The protein resides in the nucleus. Functionally, transcription factor that binds specifically to a 5'-AA[AG]G-3' consensus core sequence. The polypeptide is Dof zinc finger protein DOF1.7 (DOF1.7) (Arabidopsis thaliana (Mouse-ear cress)).